The primary structure comprises 145 residues: Holo-[acyl-carrier-protein] synthase (145 aa).

Residues aspartate 9 and glutamate 63 each contribute to the Mg(2+) site.

It belongs to the P-Pant transferase superfamily. AcpS family. It depends on Mg(2+) as a cofactor.

The protein localises to the cytoplasm. The catalysed reaction is apo-[ACP] + CoA = holo-[ACP] + adenosine 3',5'-bisphosphate + H(+). Its function is as follows. Transfers the 4'-phosphopantetheine moiety from coenzyme A to a Ser of acyl-carrier-protein. This chain is Holo-[acyl-carrier-protein] synthase, found in Burkholderia vietnamiensis (strain G4 / LMG 22486) (Burkholderia cepacia (strain R1808)).